The primary structure comprises 323 residues: Replication-associated protein A (323 aa).

Residues 18-121 enclose the CRESS-DNA virus Rep endonuclease domain; that stretch reads RHRNANTFLT…PKDKWEKGTY (104 aa). An RCR-1 motif is present at residues 25–28; it reads FLTY. 3 residues coordinate a divalent metal cation: glutamate 59, histidine 67, and histidine 69. An RCR-2 motif is present at residues 67–69; the sequence is HCH. Catalysis depends on tyrosine 107, which acts as the For DNA cleavage activity. The RCR-3 signature appears at 107-110; that stretch reads YILK. Residue aspartate 111 participates in a divalent metal cation binding. An oligomerization region spans residues 181-193; that stretch reads SASRLFPDIAEPY. Positions 204–208 match the LXCXE motif, interaction with host RBR1 motif; sequence LHCNE. Residues 256-286 form a disordered region; the sequence is KEREASTSAAQHGQVKHPGLEASDDTTTGKT.

Belongs to the geminiviridae Rep protein family. In terms of assembly, homooligomer. Interacts (via LXCXE domain) with host retinoblastoma-related protein 1 (RBR1), and may thereby deregulate the host cell cycle. Part of the C- and V-complexes which are RepA-Rep-DNA complexes involved in the c-sense and v-sense transcription. Mg(2+) serves as cofactor. Mn(2+) is required as a cofactor.

The protein localises to the host nucleus. Its subcellular location is the host cytoplasm. Its function is as follows. Implicated in enhancement of V-sense gene expression. Acts a an inhibitor of C-sense gene transcription. The protein is Replication-associated protein A of Megathyrsus maximus (PanSV).